We begin with the raw amino-acid sequence, 595 residues long: Tripeptidyl-peptidase SED3 (595 aa).

The N-terminal stretch at 1 to 22 is a signal peptide; that stretch reads MLLPWQQTIIILFLGVNSLVAA. The propeptide at 23–201 is removed in mature form; that stretch reads LRNTYRTVEE…KLETIQLSSN (179 aa). N-linked (GlcNAc...) asparagine glycosylation is found at N207, N264, and N278. Residues 209–595 form the Peptidase S53 domain; that stretch reads TITPQCLRDI…EILAKIVRDL (387 aa). Residues E285 and D289 each act as charge relay system in the active site. 2 N-linked (GlcNAc...) asparagine glycosylation sites follow: N298 and N365. The active-site Charge relay system is the S499. Residues D541 and I542 each contribute to the Ca(2+) site. N-linked (GlcNAc...) asparagine glycosylation is found at N554, N557, and N569. Positions 573 and 575 each coordinate Ca(2+).

Requires Ca(2+) as cofactor.

The protein localises to the secreted. It localises to the extracellular space. It carries out the reaction Release of an N-terminal tripeptide from a polypeptide.. In terms of biological role, secreted tripeptidyl-peptidase which degrades proteins at acidic pHs and is involved in virulence. This Arthroderma otae (strain ATCC MYA-4605 / CBS 113480) (Microsporum canis) protein is Tripeptidyl-peptidase SED3 (SED3).